A 369-amino-acid polypeptide reads, in one-letter code: Glutamate 5-kinase (369 aa).

Residue Lys-8 coordinates ATP. The substrate site is built by Ser-49, Asp-136, and Asn-148. ATP-binding positions include 168–169 (TD) and 211–217 (TGGMATK). The PUA domain occupies 276 to 354 (TGKLYLDSGA…DEISQILGYG (79 aa)).

Belongs to the glutamate 5-kinase family.

Its subcellular location is the cytoplasm. The enzyme catalyses L-glutamate + ATP = L-glutamyl 5-phosphate + ADP. Its pathway is amino-acid biosynthesis; L-proline biosynthesis; L-glutamate 5-semialdehyde from L-glutamate: step 1/2. In terms of biological role, catalyzes the transfer of a phosphate group to glutamate to form L-glutamate 5-phosphate. The polypeptide is Glutamate 5-kinase (Rippkaea orientalis (strain PCC 8801 / RF-1) (Cyanothece sp. (strain PCC 8801))).